Consider the following 414-residue polypeptide: Nuclear pore complex-interacting protein family member B7 (414 aa).

The signal sequence occupies residues 1-18 (MRLRFWLLIWLLLGFISH). The N-linked (GlcNAc...) asparagine glycan is linked to Asn-111. Disordered stretches follow at residues 242-262 (RMGRQPPPPTQQHSITDNSLS) and 335-402 (SPLP…LRTR). The segment covering 252-262 (QQHSITDNSLS) has biased composition (polar residues). Over residues 356–384 (EVEKPPKPKRWRVDEVEQSPKPKRQREAE) the composition is skewed to basic and acidic residues. Positions 390-402 (KPKRRRLSKLRTR) are enriched in basic residues.

It belongs to the NPIP family.

It is found in the secreted. The chain is Nuclear pore complex-interacting protein family member B7 (NPIPB7) from Homo sapiens (Human).